The primary structure comprises 455 residues: Venom prothrombin activator hopsarin-D (455 aa).

The N-terminal stretch at 1-20 is a signal peptide; it reads MAPQLLLCLILTFLWSVPEA. Positions 21–40 are excised as a propeptide; the sequence is ESNVFLKSKVANRFLQRTKR. The Gla domain occupies 41-86; the sequence is SNSLFEEIRPGNIERECIEEKCSKEEAREVFEDNEKTETFWNVYVD. 4-carboxyglutamate is present on residues Glu-46, Glu-47, Glu-54, Glu-56, Glu-59, Glu-60, Glu-65, Glu-66, Glu-69, Glu-72, and Glu-75. A disulfide bridge connects residues Cys-57 and Cys-62. The EGF-like 1; calcium-binding domain occupies 86 to 121; sequence DGDQCSSNPCHYHGTCKDGIGSYTCTCLPNYEGKNC. Disulfide bonds link Cys-90/Cys-101, Cys-95/Cys-110, Cys-112/Cys-121, Cys-129/Cys-140, Cys-136/Cys-149, Cys-151/Cys-164, Cys-172/Cys-328, Cys-236/Cys-252, Cys-376/Cys-390, and Cys-401/Cys-429. Ser-92 carries an O-linked (Hex...) serine glycan. Residues 129–164 enclose the EGF-like 2 domain; sequence CRAFNGNCWHFCKRVQSETQCSCAESYRLGVDGHSC. The propeptide at 182–209 is activation peptide; sequence REASLPDFVQSQKATLLKKSDNPSPDIR. Residues 210 to 453 enclose the Peptidase S1 domain; sequence IVNGMDSKLG…FIPWIKKIMS (244 aa). His-251 (charge relay system) is an active-site residue. Residue Asn-254 is glycosylated (N-linked (GlcNAc...) asparagine). Catalysis depends on Asp-308, which acts as the Charge relay system. Catalysis depends on Ser-405, which acts as the Charge relay system.

The protein belongs to the peptidase S1 family. Snake venom subfamily. In terms of assembly, heterodimer of a light chain and a heavy chain; disulfide-linked. In terms of processing, the vitamin K-dependent, enzymatic carboxylation of some glutamate residues allows the modified protein to bind calcium. In terms of tissue distribution, expressed by the venom gland.

Its subcellular location is the secreted. It carries out the reaction Selective cleavage of Arg-|-Thr and then Arg-|-Ile bonds in prothrombin to form thrombin.. Its function is as follows. Snake prothrombin activator that attacks the hemostatic system of prey. This protein is functionally similar to blood coagulation factor Xa. The procoagulant activity of hopsarin-D is approximately 10-fold lower than that of trocarin-D and FXa. This chain is Venom prothrombin activator hopsarin-D, found in Hoplocephalus stephensii (Stephens's banded snake).